A 394-amino-acid polypeptide reads, in one-letter code: Venom metalloproteinase antarease TserMP_A (394 aa).

The N-terminal stretch at 1-16 is a signal peptide; sequence MISYLASIFLLATVSA. Positions 17–157 are excised as a propeptide; it reads VPSGRVEVVF…NAENVSRMAR (141 aa). The Peptidase M12B domain occupies 162–391; that stretch reads IVVEYYIVTD…PTASCIFQQC (230 aa). A disulfide bridge connects residues Cys-295 and Cys-386. His-319 lines the Zn(2+) pocket. The active site involves Glu-320. Residues His-323 and His-329 each contribute to the Zn(2+) site.

Zn(2+) serves as cofactor. Post-translationally, contains 4 disulfide bonds. As to expression, expressed by the venom gland.

The protein localises to the secreted. With respect to regulation, inhibited by EDTA. In terms of biological role, acts as a metalloprotease. Penetrates intact tissue and specifically cleaves the vesicle-associated membrane protein 2 (VAMP2) (part of the SNARE complex) involved in pancreatic secretion, thus disrupting the normal vesicular traffic. This Tityus serrulatus (Brazilian scorpion) protein is Venom metalloproteinase antarease TserMP_A.